Consider the following 104-residue polypeptide: L-rhamnose mutarotase (104 aa).

Tyrosine 18 serves as a coordination point for substrate. The active-site Proton donor is the histidine 22. Substrate-binding positions include tyrosine 41 and 76 to 77 (WW).

This sequence belongs to the rhamnose mutarotase family. As to quaternary structure, homodimer.

It is found in the cytoplasm. It catalyses the reaction alpha-L-rhamnose = beta-L-rhamnose. It participates in carbohydrate metabolism; L-rhamnose metabolism. Its function is as follows. Involved in the anomeric conversion of L-rhamnose. The polypeptide is L-rhamnose mutarotase (Salmonella heidelberg (strain SL476)).